The following is a 450-amino-acid chain: UDP-N-acetylmuramoylalanine--D-glutamate ligase (450 aa).

ATP is bound at residue 119–125 (GSNGKTT).

This sequence belongs to the MurCDEF family.

It localises to the cytoplasm. The enzyme catalyses UDP-N-acetyl-alpha-D-muramoyl-L-alanine + D-glutamate + ATP = UDP-N-acetyl-alpha-D-muramoyl-L-alanyl-D-glutamate + ADP + phosphate + H(+). It participates in cell wall biogenesis; peptidoglycan biosynthesis. In terms of biological role, cell wall formation. Catalyzes the addition of glutamate to the nucleotide precursor UDP-N-acetylmuramoyl-L-alanine (UMA). The protein is UDP-N-acetylmuramoylalanine--D-glutamate ligase of Bacillus cereus (strain B4264).